The chain runs to 370 residues: Pulmonary surfactant-associated protein B (370 aa).

A signal peptide spans 1–24; sequence MAKSHLPPWLLLLLLPTLCGPGTA. A propeptide spanning residues 25–184 is cleaved from the precursor; that stretch reads VWATSPLACA…PHTQDLSAQR (160 aa). A Saposin A-type domain is found at 26 to 66; it reads WATSPLACAQGPEFWCQSLEQALQCKALGHCLQEVWGHVGA. 3 consecutive Saposin B-type domains span residues 66 to 148, 188 to 265, and 284 to 359; these read ADDL…QPGS, PLPL…SSVD, and QDPE…VATL. Intrachain disulfides connect Cys70/Cys144, Cys73/Cys138, Cys101/Cys113, Cys192/Cys261, Cys195/Cys255, Cys219/Cys230, Cys288/Cys355, Cys291/Cys349, and Cys314/Cys324. Positions 264–370 are excised as a propeptide; sequence VDSIGQVPPT…PLQCIQSPHF (107 aa). Asn300 carries N-linked (GlcNAc...) asparagine glycosylation.

As to quaternary structure, homodimer; disulfide-linked.

It is found in the secreted. The protein resides in the extracellular space. The protein localises to the surface film. Functionally, pulmonary surfactant-associated proteins promote alveolar stability by lowering the surface tension at the air-liquid interface in the peripheral air spaces. SP-B increases the collapse pressure of palmitic acid to nearly 70 millinewtons per meter. The protein is Pulmonary surfactant-associated protein B (SFTPB) of Oryctolagus cuniculus (Rabbit).